Consider the following 194-residue polypeptide: GTP cyclohydrolase 1 (194 aa).

C83, H86, and C155 together coordinate Zn(2+).

Belongs to the GTP cyclohydrolase I family. As to quaternary structure, toroid-shaped homodecamer, composed of two pentamers of five dimers.

It carries out the reaction GTP + H2O = 7,8-dihydroneopterin 3'-triphosphate + formate + H(+). The protein operates within cofactor biosynthesis; 7,8-dihydroneopterin triphosphate biosynthesis; 7,8-dihydroneopterin triphosphate from GTP: step 1/1. In Streptococcus pyogenes serotype M3 (strain ATCC BAA-595 / MGAS315), this protein is GTP cyclohydrolase 1.